The sequence spans 195 residues: Transcription repressor OFP17 (195 aa).

The OVATE domain occupies 130-190 (EDNAVEDACR…SRFYGELCRD (61 aa)).

The protein localises to the nucleus. Transcriptional repressor that may regulate multiple aspects of plant growth and development through the regulation of BEL1-LIKE (BLH) and KNOX TALE (KNAT) homeodomain transcription factors. This chain is Transcription repressor OFP17 (OFP17), found in Arabidopsis thaliana (Mouse-ear cress).